Reading from the N-terminus, the 1026-residue chain is Maternal effect protein staufen (1026 aa).

Residues 16 to 29 are compositionally biased toward basic residues; sequence AAHHHSHSHAHMHL. 3 disordered regions span residues 16-159, 190-210, and 234-311; these read AAHH…QLPP, NHYG…SNYA, and TPVP…KDKT. Residues 70–111 are compositionally biased toward low complexity; it reads AQQQQQQQTSSNQAGAVAAAGAAYHHGNINSNSGSNISSNSN. Residues 112–126 show a composition bias toward polar residues; sequence QMQKIRQQHQHLSSS. Composition is skewed to low complexity over residues 192-210 and 234-256; these read YGSN…SNYA and TPVP…NSTV. Positions 267–284 are enriched in basic and acidic residues; the sequence is TSQKPETRQEPASADDHV. Residues 285–303 are compositionally biased toward polar residues; the sequence is STGNIDATGALSNEDTSSS. DRBM domains follow at residues 311–378 and 490–557; these read TPMC…ETMY and PKFP…VLKT. 2 positions are modified to phosphoserine: serine 563 and serine 570. In terms of domain architecture, DRBM 3 spans 578–645; sequence SPISQVHEIG…AEKMLVELQK (68 aa). RNA is bound by residues histidine 606, lysine 608, lysine 628, lysine 629, and lysine 632. The tract at residues 647–707 is disordered; it reads PPLTPTKQTP…PPKDKLIDMD (61 aa). 2 positions are modified to phosphothreonine: threonine 650 and threonine 655. At serine 676 the chain carries Phosphoserine. Positions 678-688 are enriched in polar residues; the sequence is VSGTDGPTQTG. The DRBM 4 domain occupies 711–781; it reads NPITKLIQLQ…AQALFELLEA (71 aa). The tract at residues 855–948 is disordered; that stretch reads ESKEEEANKE…SNSTSNTQSA (94 aa). A compositionally biased stretch (low complexity) spans 864–890; the sequence is EVAVAAEENSNNSANSGDSSNSSSGDS. Over residues 891 to 901 the composition is skewed to polar residues; it reads QATEAASESAL. Composition is skewed to low complexity over residues 902–920 and 934–947; these read NTST…SNVG and NTES…NTQS. Residues 951–1018 enclose the DRBM 5 domain; sequence HMKEQLLYLS…ASNALKILSK (68 aa).

In terms of assembly, component of neuronal ribonucleoprotein complexes (RNPs) that contains at least various translational repressor and mRNA turnover proteins such as me31B, tral, Upf1, AGO2 and sometimes Fmr1. As to expression, polar granules at the posterior pole of the oocyte, and by the time the egg is laid, at the anterior pole.

It is found in the cytoplasm. The protein localises to the cytoplasmic ribonucleoprotein granule. Its function is as follows. RNA-binding protein which forms ribonucleoprotein complexes (RNPs) that play critical roles in the localization, translational repression and turnover of RNAs during embryogenesis, neurotransmission and neurogenesis. In the oocyte, essential for the localization of both the osk/oskar mRNA to the posterior pole and bcd/bicoid RNA to the anterior pole, and is therefore required for the correct anterior-posterior patterning of the developing embryo. Association with osk or bcd at their respective poles, appears to promote the formation and stabilization of the ribonucleoprotein complexes. Integral component of diverse neuritic ribonucleoprotein complexes (RNPs) that mediate the transport, translation and turnover of neuronal RNAs during neuorgenesis and the translation repression of synaptic transcripts in preparation for their dendritic targeting. The polypeptide is Maternal effect protein staufen (stau) (Drosophila melanogaster (Fruit fly)).